Consider the following 124-residue polypeptide: Replication restart protein PriB (124 aa).

The 101-residue stretch at 12-112 folds into the SSB domain; that stretch reads IDNCLILSGS…VHAEHIEFID (101 aa).

The protein belongs to the PriB family. As to quaternary structure, homodimer. Interacts with PriA and DnaT. Component of the replication restart primosome. Primosome assembly occurs via a 'hand-off' mechanism. PriA binds to replication forks, subsequently PriB then DnaT bind; DnaT then displaces ssDNA to generate the helicase loading substrate.

Involved in the restart of stalled replication forks, which reloads the replicative helicase on sites other than the origin of replication; the PriA-PriB pathway is the major replication restart pathway. During primosome assembly it facilitates complex formation between PriA and DnaT on DNA; stabilizes PriA on DNA. Stimulates the DNA unwinding activity of PriA helicase. This chain is Replication restart protein PriB, found in Actinobacillus pleuropneumoniae serotype 5b (strain L20).